The chain runs to 300 residues: Ribosomal RNA small subunit methyltransferase H (300 aa).

S-adenosyl-L-methionine contacts are provided by residues 33–35 (GGH), aspartate 53, phenylalanine 78, aspartate 97, and glutamine 104.

This sequence belongs to the methyltransferase superfamily. RsmH family.

The protein resides in the cytoplasm. It catalyses the reaction cytidine(1402) in 16S rRNA + S-adenosyl-L-methionine = N(4)-methylcytidine(1402) in 16S rRNA + S-adenosyl-L-homocysteine + H(+). Specifically methylates the N4 position of cytidine in position 1402 (C1402) of 16S rRNA. The sequence is that of Ribosomal RNA small subunit methyltransferase H from Karelsulcia muelleri (strain GWSS) (Sulcia muelleri).